We begin with the raw amino-acid sequence, 99 residues long: Large ribosomal subunit protein uL23 (99 aa).

It belongs to the universal ribosomal protein uL23 family. Part of the 50S ribosomal subunit. Contacts protein L29, and trigger factor when it is bound to the ribosome.

One of the early assembly proteins it binds 23S rRNA. One of the proteins that surrounds the polypeptide exit tunnel on the outside of the ribosome. Forms the main docking site for trigger factor binding to the ribosome. This is Large ribosomal subunit protein uL23 from Rhodopseudomonas palustris (strain BisB5).